Consider the following 257-residue polypeptide: Fimbrial assembly protein, serogroup E1 (257 aa).

This is Fimbrial assembly protein, serogroup E1 (fimB) from Dichelobacter nodosus (Bacteroides nodosus).